The following is a 290-amino-acid chain: Probable transcriptional regulatory protein HAH1 (290 aa).

It belongs to the TACO1 family.

It is found in the mitochondrion. The protein is Probable transcriptional regulatory protein HAH1 of Saccharomyces cerevisiae (strain ATCC 204508 / S288c) (Baker's yeast).